We begin with the raw amino-acid sequence, 246 residues long: Ly6/PLAUR domain-containing protein 4 (246 aa).

Residues methionine 1–alanine 26 form the signal peptide. A glycan (N-linked (GlcNAc...) asparagine) is linked at asparagine 117. One can recognise a UPAR/Ly6 domain in the interval cysteine 142–valine 223. Alanine 225 carries GPI-anchor amidated alanine lipidation. Residues alanine 226–aspartate 246 constitute a propeptide, removed in mature form.

The protein localises to the cell membrane. In Homo sapiens (Human), this protein is Ly6/PLAUR domain-containing protein 4 (LYPD4).